The following is a 1425-amino-acid chain: Nephrocystin-4 (1425 aa).

Ser-145 carries the phosphoserine modification. The tract at residues 448–554 (FSLSSDGPTE…VSHLEADLSQ (107 aa)) is disordered. Composition is skewed to low complexity over residues 473–484 (PASPSGTPAPAA) and 507–530 (SPLSPALQSSSKPPLQPPDSSQSP). Residues 822–1425 (LTLANVGHAC…ETFCVKVLYQ (604 aa)) form a sufficient for basal bodies localization region.

The protein belongs to the NPHP4 family. Interacts with NPHP1 and RPGRIP1L/NPHP8; NPHP1, NPHP4 and RPGRIP1L are proposed to form a functional NPHP1-4-8 module localized to cell-cell contacts and the ciliary transition zone; NPHP4 mediates the interaction between NPHP1 and RPGRIP1L. Interacts with IQCB1/NPHP5; the interaction likely requires additional interactors. Interacts with RPGRIP1, CEP164, JADE1, PALS1, INADL, PARD6A, INVS, DVL2. Interacts with INTU; INTU mediates the interaction between NPHP4 and DAAM1. Interacts with JADE1. Interacts with SPATA7. Expressed in the retina (at protein level).

Its subcellular location is the cytoplasm. The protein localises to the cytoskeleton. It localises to the cilium basal body. It is found in the microtubule organizing center. The protein resides in the centrosome. Its subcellular location is the cell junction. The protein localises to the tight junction. Its function is as follows. Involved in the organization of apical junctions; the function is proposed to implicate a NPHP1-4-8 module. Does not seem to be strictly required for ciliogenesis. Required for building functional cilia. Involved in the organization of the subapical actin network in multiciliated epithelial cells. Seems to recruit INT to basal bodies of motile cilia which subsequently interacts with actin-modifying proteins such as DAAM1. In cooperation with INVS may down-regulate the canonical Wnt pathway and promote the Wnt-PCP pathway by regulating expression and subcellular location of disheveled proteins. Stabilizes protein levels of JADE1 and promotes its translocation to the nucleus leading to cooperative inhibition of canonical Wnt signaling. Acts as negative regulator of the hippo pathway by association with LATS1 and modifying LATS1-dependent phosphorylation and localization of WWTR1/TAZ. This is Nephrocystin-4 (Nphp4) from Mus musculus (Mouse).